The primary structure comprises 313 residues: MASPSNDSTAPVSEFLLICFPNFQSWQHWLSLPLSLLFLLAMGANTTLLITIQLEASLHQPLYYLLSLLSLLDIVLCLTVIPKVLAIFWFDLRSISFPACFLQMFIMNSFLTMESCTFMVMAYDRYVAICHPLRYPSIITDQFVARAVVFVIARNAFVSLPVPMLSARLRYCAGNIIKNCICSNLSVSKLSCDDITFNQLYQFVAGWTLLGSDLILIVISYSFILKVVLRIKAEGAVAKALSTCGSHFILILFFSTVLLVLVITNLARKRIPPDVPILLNILHHLIPPALNPIVYGVRTKEIKQGIQNLLKRL.

At 1 to 28 (MASPSNDSTAPVSEFLLICFPNFQSWQH) the chain is on the extracellular side. Residue asparagine 6 is glycosylated (N-linked (GlcNAc...) asparagine). A helical membrane pass occupies residues 29 to 49 (WLSLPLSLLFLLAMGANTTLL). At 50–57 (ITIQLEAS) the chain is on the cytoplasmic side. Residues 58-78 (LHQPLYYLLSLLSLLDIVLCL) traverse the membrane as a helical segment. Topologically, residues 79 to 102 (TVIPKVLAIFWFDLRSISFPACFL) are extracellular. A disulfide bridge connects residues cysteine 100 and cysteine 192. A helical membrane pass occupies residues 103-123 (QMFIMNSFLTMESCTFMVMAY). The Cytoplasmic portion of the chain corresponds to 124-142 (DRYVAICHPLRYPSIITDQ). A helical transmembrane segment spans residues 143-163 (FVARAVVFVIARNAFVSLPVP). Over 164–199 (MLSARLRYCAGNIIKNCICSNLSVSKLSCDDITFNQ) the chain is Extracellular. The N-linked (GlcNAc...) asparagine glycan is linked to asparagine 184. A helical transmembrane segment spans residues 200 to 220 (LYQFVAGWTLLGSDLILIVIS). At 221–240 (YSFILKVVLRIKAEGAVAKA) the chain is on the cytoplasmic side. The chain crosses the membrane as a helical span at residues 241–261 (LSTCGSHFILILFFSTVLLVL). Residues 262–276 (VITNLARKRIPPDVP) are Extracellular-facing. The chain crosses the membrane as a helical span at residues 277-297 (ILLNILHHLIPPALNPIVYGV). Over 298 to 313 (RTKEIKQGIQNLLKRL) the chain is Cytoplasmic.

The protein belongs to the G-protein coupled receptor 1 family.

Its subcellular location is the cell membrane. Odorant receptor. The protein is Olfactory receptor 56A4 (OR56A4) of Homo sapiens (Human).